Consider the following 428-residue polypeptide: Serine--tRNA ligase (428 aa).

231–233 (TAE) contributes to the L-serine binding site. 262 to 264 (RSE) lines the ATP pocket. Residue glutamate 285 coordinates L-serine. ATP is bound at residue 349–352 (EISS). Serine 385 lines the L-serine pocket.

It belongs to the class-II aminoacyl-tRNA synthetase family. Type-1 seryl-tRNA synthetase subfamily. In terms of assembly, homodimer. The tRNA molecule binds across the dimer.

It is found in the cytoplasm. It carries out the reaction tRNA(Ser) + L-serine + ATP = L-seryl-tRNA(Ser) + AMP + diphosphate + H(+). It catalyses the reaction tRNA(Sec) + L-serine + ATP = L-seryl-tRNA(Sec) + AMP + diphosphate + H(+). It functions in the pathway aminoacyl-tRNA biosynthesis; selenocysteinyl-tRNA(Sec) biosynthesis; L-seryl-tRNA(Sec) from L-serine and tRNA(Sec): step 1/1. Its function is as follows. Catalyzes the attachment of serine to tRNA(Ser). Is also able to aminoacylate tRNA(Sec) with serine, to form the misacylated tRNA L-seryl-tRNA(Sec), which will be further converted into selenocysteinyl-tRNA(Sec). This Staphylococcus aureus (strain MSSA476) protein is Serine--tRNA ligase.